The following is an 82-amino-acid chain: U6 snRNA-associated Sm-like protein LSm6 (82 aa).

Positions 13 to 82 constitute a Sm domain; that stretch reads DPSGFLSEII…GNNVMYISAD (70 aa).

Belongs to the snRNP Sm proteins family. SmF/LSm6 subfamily. As to quaternary structure, component of the heptameric LSM1-LSM7 complex, which consists of snr-1/lsm1, snr-2/lsm2, snr-3/lsm3, snr-4/lsm4, snr-5/lsm5, snr-6/lsm6 and snr-7/lsm7. Component of the heptameric LSM2-LSM8 complex, which consists of snr-2/lsm2, snr-3/lsm3, snr-4/lsm4, snr-5/lsm5, snr-6/lsm6, snr-7/lsm7 and snr-8/lsm8. The LSm subunits form a seven-membered ring structure with a doughnut shape.

Its subcellular location is the cytoplasm. It localises to the nucleus. Functionally, component of LSm protein complexes, which are involved in RNA processing and may function in a chaperone-like manner, facilitating the efficient association of RNA processing factors with their substrates. Component of the cytoplasmic LSM1-LSM7 complex, which is thought to be involved in mRNA degradation by activating the decapping step in the 5'-to-3' mRNA decay pathway. Component of the nuclear LSM2-LSM8 complex, which is involved in splicing of nuclear mRNAs. LSM2-LSM8 associates with multiple snRNP complexes containing the U6 snRNA (U4/U6 di-snRNP, spliceosomal U4/U6.U5 tri-snRNP, and free U6 snRNP). It binds directly to the 3'-terminal U-tract of U6 snRNA and plays a role in the biogenesis and stability of the U6 snRNP and U4/U6 snRNP complexes. LSM2-LSM8 probably also is involved degradation of nuclear pre-mRNA by targeting them for decapping, and in processing of pre-tRNAs, pre-rRNAs and U3 snoRNA. In Neurospora crassa (strain ATCC 24698 / 74-OR23-1A / CBS 708.71 / DSM 1257 / FGSC 987), this protein is U6 snRNA-associated Sm-like protein LSm6 (snr-6).